Reading from the N-terminus, the 867-residue chain is Schizokinen transporter SchT (867 aa).

The segment at 40–62 is disordered; sequence HPGKTQEAPSPTQLNTQSPAPNA. The span at 46-62 shows a compositional bias: polar residues; the sequence is EAPSPTQLNTQSPAPNA. The TonB box signature appears at 185–192; the sequence is IELVVTAT. Residues 197–307 form the TBDR plug domain; it reads PIQNVPRSIT…TGGVINIITR (111 aa). Residues 313 to 867 form the TBDR beta-barrel domain; that stretch reads KLTSRTEVGV…TLSIKYSFDW (555 aa). A TonB C-terminal box motif is present at residues 850–867; sequence AYAAARGRTLSIKYSFDW.

Belongs to the TonB-dependent receptor family.

It localises to the cell outer membrane. Functionally, involved in the TonB-dependent uptake of iron in complex with schizokinen, a dihydroxamate-type siderophore. In Nostoc sp. (strain PCC 7120 / SAG 25.82 / UTEX 2576), this protein is Schizokinen transporter SchT.